The following is a 259-amino-acid chain: Electron transfer flavoprotein subunit beta (259 aa).

This sequence belongs to the ETF beta-subunit/FixA family. Heterodimer of an alpha and a beta subunit. FAD serves as cofactor. AMP is required as a cofactor.

The electron transfer flavoprotein serves as a specific electron acceptor for other dehydrogenases. It transfers the electrons to the main respiratory chain via ETF-ubiquinone oxidoreductase (ETF dehydrogenase). In Clostridium acetobutylicum (strain ATCC 824 / DSM 792 / JCM 1419 / IAM 19013 / LMG 5710 / NBRC 13948 / NRRL B-527 / VKM B-1787 / 2291 / W), this protein is Electron transfer flavoprotein subunit beta (etfB).